Reading from the N-terminus, the 116-residue chain is Type IV narrow pilus major component PilA5 (116 aa).

The propeptide at M1 to G5 is leader sequence. At F6 the chain carries N-methylphenylalanine. A helical membrane pass occupies residues F6 to V26.

In terms of processing, glycosylated.

It is found in the cell inner membrane. The protein localises to the cell outer membrane. The protein resides in the periplasm. Functionally, plays an essential role in forming the main structure of the narrow T4P pili that participates in twitching motility. This is Type IV narrow pilus major component PilA5 (pilA5) from Thermus thermophilus (strain ATCC BAA-163 / DSM 7039 / HB27).